A 43-amino-acid chain; its full sequence is Myotoxin-1 (43 aa).

3 cysteine pairs are disulfide-bonded: Cys4/Cys36, Cys11/Cys30, and Cys18/Cys37.

It belongs to the crotamine-myotoxin family. As to quaternary structure, monomer. Expressed by the venom gland.

The protein localises to the secreted. Cationic peptide that possesses multiple functions. It acts as a cell-penetrating peptide (CPP), and as a potent voltage-gated potassium channel (Kv) inhibitor. It exhibits antimicrobial activities, hind limb paralysis, and severe muscle necrosis by a non-enzymatic mechanism. The sequence is that of Myotoxin-1 from Crotalus concolor (Midget faded rattlesnake).